Consider the following 219-residue polypeptide: Glutathione S-transferase (219 aa).

One can recognise a GST N-terminal domain in the interval 2–89 (SQPILGYWDI…YLGRKYKLNG (88 aa)). Residues 8–9 (YW), 44–47 (RSEW), K51, 60–61 (NL), and 73–74 (QT) each bind glutathione. A GST C-terminal domain is found at 91-207 (NDHEEIRISM…YIKKQQPKTF (117 aa)). Y117 lines the substrate pocket.

Belongs to the GST superfamily. Mu family. Homodimer.

The protein resides in the cytoplasm. The enzyme catalyses RX + glutathione = an S-substituted glutathione + a halide anion + H(+). In Dermatophagoides pteronyssinus (European house dust mite), this protein is Glutathione S-transferase.